Here is an 86-residue protein sequence, read N- to C-terminus: UPF0147 protein PYRAB16980 (86 aa).

This sequence belongs to the UPF0147 family.

The chain is UPF0147 protein PYRAB16980 from Pyrococcus abyssi (strain GE5 / Orsay).